The sequence spans 458 residues: UDP-N-acetylmuramoylalanine--D-glutamate ligase (458 aa).

124 to 130 (GSDGKTT) serves as a coordination point for ATP.

Belongs to the MurCDEF family.

It is found in the cytoplasm. It carries out the reaction UDP-N-acetyl-alpha-D-muramoyl-L-alanine + D-glutamate + ATP = UDP-N-acetyl-alpha-D-muramoyl-L-alanyl-D-glutamate + ADP + phosphate + H(+). It functions in the pathway cell wall biogenesis; peptidoglycan biosynthesis. Functionally, cell wall formation. Catalyzes the addition of glutamate to the nucleotide precursor UDP-N-acetylmuramoyl-L-alanine (UMA). The polypeptide is UDP-N-acetylmuramoylalanine--D-glutamate ligase (Clostridium botulinum (strain Langeland / NCTC 10281 / Type F)).